The chain runs to 349 residues: Holliday junction branch migration complex subunit RuvB (349 aa).

The tract at residues 1-181 is large ATPase domain (RuvB-L); it reads MDDRILTSVN…FGVLCPMEFY (181 aa). Residues Leu-20, Arg-21, Gly-62, Lys-65, Thr-66, Thr-67, 128–130, Arg-171, Tyr-181, and Arg-218 each bind ATP; that span reads EDY. Thr-66 is a binding site for Mg(2+). The interval 182-252 is small ATPAse domain (RuvB-S); it reads NDEELKEIIV…SAKKALNLLE (71 aa). Residues 255–349 are head domain (RuvB-H); the sequence is DEGFDSIDNK…DQCSFFKKEK (95 aa). 2 residues coordinate DNA: Arg-310 and Arg-315.

It belongs to the RuvB family. In terms of assembly, homohexamer. Forms an RuvA(8)-RuvB(12)-Holliday junction (HJ) complex. HJ DNA is sandwiched between 2 RuvA tetramers; dsDNA enters through RuvA and exits via RuvB. An RuvB hexamer assembles on each DNA strand where it exits the tetramer. Each RuvB hexamer is contacted by two RuvA subunits (via domain III) on 2 adjacent RuvB subunits; this complex drives branch migration. In the full resolvosome a probable DNA-RuvA(4)-RuvB(12)-RuvC(2) complex forms which resolves the HJ.

The protein resides in the cytoplasm. The catalysed reaction is ATP + H2O = ADP + phosphate + H(+). In terms of biological role, the RuvA-RuvB-RuvC complex processes Holliday junction (HJ) DNA during genetic recombination and DNA repair, while the RuvA-RuvB complex plays an important role in the rescue of blocked DNA replication forks via replication fork reversal (RFR). RuvA specifically binds to HJ cruciform DNA, conferring on it an open structure. The RuvB hexamer acts as an ATP-dependent pump, pulling dsDNA into and through the RuvAB complex. RuvB forms 2 homohexamers on either side of HJ DNA bound by 1 or 2 RuvA tetramers; 4 subunits per hexamer contact DNA at a time. Coordinated motions by a converter formed by DNA-disengaged RuvB subunits stimulates ATP hydrolysis and nucleotide exchange. Immobilization of the converter enables RuvB to convert the ATP-contained energy into a lever motion, pulling 2 nucleotides of DNA out of the RuvA tetramer per ATP hydrolyzed, thus driving DNA branch migration. The RuvB motors rotate together with the DNA substrate, which together with the progressing nucleotide cycle form the mechanistic basis for DNA recombination by continuous HJ branch migration. Branch migration allows RuvC to scan DNA until it finds its consensus sequence, where it cleaves and resolves cruciform DNA. This Clostridium acetobutylicum (strain ATCC 824 / DSM 792 / JCM 1419 / IAM 19013 / LMG 5710 / NBRC 13948 / NRRL B-527 / VKM B-1787 / 2291 / W) protein is Holliday junction branch migration complex subunit RuvB.